The following is a 212-amino-acid chain: Probable dual specificity protein phosphatase DDB_G0269404 (212 aa).

In terms of domain architecture, Tyrosine-protein phosphatase spans 30 to 169 (FDAQEVIPNL…LINYEATILK (140 aa)). C113 functions as the Phosphocysteine intermediate in the catalytic mechanism.

Belongs to the protein-tyrosine phosphatase family. Non-receptor class dual specificity subfamily.

It carries out the reaction O-phospho-L-tyrosyl-[protein] + H2O = L-tyrosyl-[protein] + phosphate. The catalysed reaction is O-phospho-L-seryl-[protein] + H2O = L-seryl-[protein] + phosphate. The enzyme catalyses O-phospho-L-threonyl-[protein] + H2O = L-threonyl-[protein] + phosphate. Has a dual specificity toward Ser/Thr and Tyr-containing proteins. This Dictyostelium discoideum (Social amoeba) protein is Probable dual specificity protein phosphatase DDB_G0269404.